We begin with the raw amino-acid sequence, 226 residues long: MSDSTTIALLSGGLDSATAAALAIEAGQKVIGLSFDYGQRHRKELQAAEELAACMGLTEHHVISVNLGSWGGSSLTDLTQTVPSEGVVDGVIPNTYVPGRNTVFIAIGLSLAEARHANRLVLGVNAMDYSGYPDCRPDYLKAYQSLADLANKAGREGHGIKLWAPLMHWHKKRIVQEALRLGVPIDKTWSCYSGGDHACGICDSCRIRDAALSEAGRSDLCSKPAP.

ATP is bound at residue 10–20; the sequence is LSGGLDSATAA. Zn(2+)-binding residues include cysteine 191, cysteine 199, cysteine 202, and cysteine 205.

It belongs to the QueC family. Requires Zn(2+) as cofactor.

It catalyses the reaction 7-carboxy-7-deazaguanine + NH4(+) + ATP = 7-cyano-7-deazaguanine + ADP + phosphate + H2O + H(+). The protein operates within purine metabolism; 7-cyano-7-deazaguanine biosynthesis. Functionally, catalyzes the ATP-dependent conversion of 7-carboxy-7-deazaguanine (CDG) to 7-cyano-7-deazaguanine (preQ(0)). In Prochlorococcus marinus (strain MIT 9303), this protein is 7-cyano-7-deazaguanine synthase.